The primary structure comprises 1494 residues: DNA-directed RNA polymerase subunit beta' (1494 aa).

Zn(2+) contacts are provided by Cys67, Cys69, Cys82, and Cys85. 3 residues coordinate Mg(2+): Asp499, Asp501, and Asp503. The Zn(2+) site is built by Cys868, Cys944, Cys951, and Cys954.

It belongs to the RNA polymerase beta' chain family. In terms of assembly, the RNAP catalytic core consists of 2 alpha, 1 beta, 1 beta' and 1 omega subunit. When a sigma factor is associated with the core the holoenzyme is formed, which can initiate transcription. Requires Mg(2+) as cofactor. Zn(2+) is required as a cofactor.

It carries out the reaction RNA(n) + a ribonucleoside 5'-triphosphate = RNA(n+1) + diphosphate. DNA-dependent RNA polymerase catalyzes the transcription of DNA into RNA using the four ribonucleoside triphosphates as substrates. The polypeptide is DNA-directed RNA polymerase subunit beta' (Chlorobaculum parvum (strain DSM 263 / NCIMB 8327) (Chlorobium vibrioforme subsp. thiosulfatophilum)).